The sequence spans 357 residues: tRNA-specific 2-thiouridylase MnmA (357 aa).

ATP is bound by residues 7–14 and Leu-33; that span reads GLSGGVDS. Cys-94 (nucleophile) is an active-site residue. A disulfide bridge connects residues Cys-94 and Cys-193. ATP is bound at residue Gly-119. The interval 143–145 is interaction with tRNA; the sequence is KDQ. The active-site Cysteine persulfide intermediate is Cys-193. The tract at residues 298 to 299 is interaction with tRNA; that stretch reads RY.

It belongs to the MnmA/TRMU family.

The protein localises to the cytoplasm. The enzyme catalyses S-sulfanyl-L-cysteinyl-[protein] + uridine(34) in tRNA + AH2 + ATP = 2-thiouridine(34) in tRNA + L-cysteinyl-[protein] + A + AMP + diphosphate + H(+). In terms of biological role, catalyzes the 2-thiolation of uridine at the wobble position (U34) of tRNA, leading to the formation of s(2)U34. This Synechococcus sp. (strain ATCC 27144 / PCC 6301 / SAUG 1402/1) (Anacystis nidulans) protein is tRNA-specific 2-thiouridylase MnmA.